The sequence spans 393 residues: S-adenosylmethionine synthase 3 (393 aa).

Glutamate 43 contributes to the K(+) binding site. Residues glutamate 56 and glutamine 99 each coordinate L-methionine. ATP-binding positions include 167–169 (DGK), 235–238 (SGRF), aspartate 246, 252–253 (RK), alanine 269, lysine 273, and lysine 277. Aspartate 246 is an L-methionine binding site. Residue lysine 277 participates in L-methionine binding.

It belongs to the AdoMet synthase family. As to quaternary structure, homotetramer. The cofactor is Mn(2+). Mg(2+) is required as a cofactor. Co(2+) serves as cofactor. Requires K(+) as cofactor.

It is found in the cytoplasm. It catalyses the reaction L-methionine + ATP + H2O = S-adenosyl-L-methionine + phosphate + diphosphate. It functions in the pathway amino-acid biosynthesis; S-adenosyl-L-methionine biosynthesis; S-adenosyl-L-methionine from L-methionine: step 1/1. Its function is as follows. Catalyzes the formation of S-adenosylmethionine from methionine and ATP. The reaction comprises two steps that are both catalyzed by the same enzyme: formation of S-adenosylmethionine (AdoMet) and triphosphate, and subsequent hydrolysis of the triphosphate. This is S-adenosylmethionine synthase 3 (SAM3) from Actinidia chinensis var. chinensis (Chinese soft-hair kiwi).